The following is a 447-amino-acid chain: Putative vacuolar cation/proton exchanger 4 (447 aa).

Positions M1–E29 are disordered. Over M1 to K65 the chain is Cytoplasmic. Positions N10 to S22 are enriched in polar residues. The helical transmembrane segment at I66 to L86 threads the bilayer. At N87–Y93 the chain is on the extracellular side. The helical transmembrane segment at G94–A114 threads the bilayer. Residues T115–E122 lie on the Cytoplasmic side of the membrane. Residues V123 to A143 form a helical membrane-spanning segment. The segment at G132 to V167 is cation selection. Residues L144–S159 lie on the Extracellular side of the membrane. The helical transmembrane segment at I160–G180 threads the bilayer. At K181–D190 the chain is on the cytoplasmic side. The helical transmembrane segment at A191–L211 threads the bilayer. Residues H212 to E224 are Extracellular-facing. A helical transmembrane segment spans residues L225 to F245. Residues Q246–R286 lie on the Cytoplasmic side of the membrane. The helical transmembrane segment at E287–V307 threads the bilayer. Topologically, residues D308 to N318 are extracellular. Residues I319–A339 traverse the membrane as a helical segment. Residues G333–G368 form a cation selection region. Residues N340–S353 are Cytoplasmic-facing. The helical transmembrane segment at L354–V374 threads the bilayer. Residues M375–D384 lie on the Extracellular side of the membrane. Residues L385–L405 traverse the membrane as a helical segment. The Cytoplasmic segment spans residues L406–C413. A helical membrane pass occupies residues V414 to A434. Residues D435 to N447 lie on the Extracellular side of the membrane.

The protein belongs to the Ca(2+):cation antiporter (CaCA) (TC 2.A.19) family. Cation/proton exchanger (CAX) subfamily.

Its subcellular location is the vacuole membrane. Functionally, vacuolar cation/proton exchanger (CAX). Translocates Ca(2+) and other metal ions into vacuoles using the proton gradient formed by H(+)-ATPase and H(+)-pyrophosphatase. This Oryza sativa subsp. japonica (Rice) protein is Putative vacuolar cation/proton exchanger 4.